The chain runs to 493 residues: Cysteine--tRNA ligase (493 aa).

Cys29 provides a ligand contact to Zn(2+). Positions 31–41 (VTVYDLCHLGH) match the 'HIGH' region motif. The Zn(2+) site is built by Cys213, His238, and Glu242. The 'KMSKS' region motif lies at 270-274 (KMSKS). ATP is bound at residue Lys273.

It belongs to the class-I aminoacyl-tRNA synthetase family. In terms of assembly, monomer. Zn(2+) is required as a cofactor.

The protein resides in the cytoplasm. The catalysed reaction is tRNA(Cys) + L-cysteine + ATP = L-cysteinyl-tRNA(Cys) + AMP + diphosphate. This Parasynechococcus marenigrum (strain WH8102) protein is Cysteine--tRNA ligase.